A 189-amino-acid chain; its full sequence is uncharacterized protein (189 aa).

Positions 1–20 (MKFSTVGFLFSTILFKSAFA) are cleaved as a signal peptide. Residues 74–109 (KKNEVLVDVLKKCDPSGNRRITLDEFLAFRKNGGEL) enclose the EF-hand domain. D87, S89, N91, R93, and E98 together coordinate Ca(2+).

The protein localises to the endoplasmic reticulum lumen. The protein resides in the golgi apparatus lumen. This is an uncharacterized protein from Schizosaccharomyces pombe (strain 972 / ATCC 24843) (Fission yeast).